A 217-amino-acid polypeptide reads, in one-letter code: Ras-related protein RABA2d (217 aa).

19–26 (GDSGVGKT) serves as a coordination point for GTP. Residues 41–49 (SKSTIGVEF) carry the Effector region motif. Residues 67 to 71 (DTAGQ), 125 to 128 (NKAD), and 155 to 156 (SA) contribute to the GTP site. Residues 196–217 (GQGTTINVEDTSGAGKRGCCST) form a disordered region. S-geranylgeranyl cysteine attachment occurs at residues Cys-214 and Cys-215.

Belongs to the small GTPase superfamily. Rab family. Expressed in root tips.

The protein localises to the endosome membrane. The protein resides in the golgi apparatus. It is found in the trans-Golgi network membrane. In terms of biological role, intracellular vesicle trafficking and protein transport. This Arabidopsis thaliana (Mouse-ear cress) protein is Ras-related protein RABA2d (RABA2D).